The chain runs to 445 residues: Alpha-1,3-mannosyl-glycoprotein 2-beta-N-acetylglucosaminyltransferase (445 aa).

Topologically, residues 1 to 6 (MLKKQS) are cytoplasmic. A helical; Signal-anchor for type II membrane protein membrane pass occupies residues 7–29 (AGLVLWGAILFVAWNALLLLFFW). Over 30-445 (TRPAPGRPPS…TWEGYDPSWN (416 aa)) the chain is Lumenal. Cys113 and Cys143 are joined by a disulfide. Residues Arg115, Asp142, His188, and Asp210 each coordinate substrate. Asp211 lines the Mn(2+) pocket. A disulfide bridge links Cys237 with Cys303. Residue Asp289 is the Proton acceptor of the active site. Ser320 is a binding site for substrate.

Belongs to the glycosyltransferase 13 family. Interacts with MGAT4D. Interacts with BRI3 (isoforms 1 and 2); the interaction with isoform 2 is weaker than with isoform 1. Mn(2+) serves as cofactor.

The protein resides in the golgi apparatus membrane. The protein localises to the cytoplasm. It is found in the perinuclear region. It catalyses the reaction N(4)-(alpha-D-Man-(1-&gt;3)-[alpha-D-Man-(1-&gt;3)-[alpha-D-Man-(1-&gt;6)]-alpha-D-Man-(1-&gt;6)]-beta-D-Man-(1-&gt;4)-beta-D-GlcNAc-(1-&gt;4)-beta-D-GlcNAc)-L-asparaginyl-[protein] (N-glucan mannose isomer 5A1,2) + UDP-N-acetyl-alpha-D-glucosamine = N(4)-{beta-D-GlcNAc-(1-&gt;2)-alpha-D-Man-(1-&gt;3)-[alpha-D-Man-(1-&gt;3)-[alpha-D-Man-(1-&gt;6)]-alpha-D-Man-(1-&gt;6)]-beta-D-Man-(1-&gt;4)-beta-D-GlcNAc-(1-&gt;4)-beta-D-GlcNAc}-L-asparaginyl-[protein] + UDP + H(+). The protein operates within protein modification; protein glycosylation. Functionally, initiates complex N-linked carbohydrate formation. Essential for the conversion of high-mannose to hybrid and complex N-glycans. The protein is Alpha-1,3-mannosyl-glycoprotein 2-beta-N-acetylglucosaminyltransferase (MGAT1) of Homo sapiens (Human).